Reading from the N-terminus, the 349-residue chain is tRNA pseudouridine synthase D (349 aa).

Phe-26 provides a ligand contact to substrate. The active-site Nucleophile is the Asp-79. Substrate is bound at residue Asn-128. The TRUD domain maps to 154–303 (GVPNYFGSQR…VDAARRAMLV (150 aa)). Substrate is bound at residue Phe-329.

The protein belongs to the pseudouridine synthase TruD family.

It carries out the reaction uridine(13) in tRNA = pseudouridine(13) in tRNA. Functionally, responsible for synthesis of pseudouridine from uracil-13 in transfer RNAs. The protein is tRNA pseudouridine synthase D of Erwinia tasmaniensis (strain DSM 17950 / CFBP 7177 / CIP 109463 / NCPPB 4357 / Et1/99).